The primary structure comprises 329 residues: Serine dehydratase-like (329 aa).

Met-1 is subject to N-acetylmethionine. The residue at position 48 (Lys-48) is an N6-(pyridoxal phosphate)lysine.

The protein belongs to the serine/threonine dehydratase family. Monomer. Homodimer. The cofactor is pyridoxal 5'-phosphate.

The enzyme catalyses L-serine = pyruvate + NH4(+). It catalyses the reaction L-threonine = 2-oxobutanoate + NH4(+). The catalysed reaction is L-glutamate = D-glutamate. Its activity is regulated as follows. Serine dehydratase activity is inhibited by manganese chloride, ferrous chloride, cobalt chloride, cupric chloride, nickel chloride and zinc chloride. Glutamate racemase activity is inhibited by manganese chloride, ferrous chloride, cupric chloride and zinc chloride. Its function is as follows. Catalyzes the pyridoxal-phosphate-dependent dehydrative deamination of L-threonine and L-serine to ammonia and alpha-ketobutyrate and pyruvate, respectively. Also exhibits racemase activity towards L-glutamate and D-glutamate. This chain is Serine dehydratase-like (Sdsl), found in Rattus norvegicus (Rat).